The sequence spans 57 residues: UPF0391 membrane protein RPA3505 (57 aa).

The next 2 membrane-spanning stretches (helical) occupy residues 4–24 (WVVTFLVVALIAGLLGFGGIA) and 30–50 (IAKIIFFIAIVLFLVSAVISI).

The protein belongs to the UPF0391 family.

The protein resides in the cell membrane. The polypeptide is UPF0391 membrane protein RPA3505 (Rhodopseudomonas palustris (strain ATCC BAA-98 / CGA009)).